We begin with the raw amino-acid sequence, 485 residues long: NADH-quinone oxidoreductase subunit N (485 aa).

Transmembrane regions (helical) follow at residues 8-28, 35-55, 71-91, 105-125, 127-147, 159-179, 203-223, 235-255, 271-291, 297-317, 326-346, 373-393, 408-430, and 455-475; these read LIAL…MLSI, FLNA…LWFV, GFAM…CTFA, FYLL…ANHL, SLFL…GYAF, YTIL…LVYA, LLAG…LVPF, PAPV…GVVM, VVLA…ALSQ, LLGY…IALQ, VGVY…VVSL, AAVM…LGFI, WWLV…RVAV, and IVVL…QPLI.

This sequence belongs to the complex I subunit 2 family. In terms of assembly, NDH-1 is composed of 13 different subunits. Subunits NuoA, H, J, K, L, M, N constitute the membrane sector of the complex.

It is found in the cell inner membrane. The enzyme catalyses a quinone + NADH + 5 H(+)(in) = a quinol + NAD(+) + 4 H(+)(out). Functionally, NDH-1 shuttles electrons from NADH, via FMN and iron-sulfur (Fe-S) centers, to quinones in the respiratory chain. The immediate electron acceptor for the enzyme in this species is believed to be ubiquinone. Couples the redox reaction to proton translocation (for every two electrons transferred, four hydrogen ions are translocated across the cytoplasmic membrane), and thus conserves the redox energy in a proton gradient. In Shigella flexneri, this protein is NADH-quinone oxidoreductase subunit N.